The chain runs to 431 residues: Enolase (431 aa).

Residue Q167 participates in (2R)-2-phosphoglycerate binding. Residue E209 is the Proton donor of the active site. Residues D246, E290, and D317 each coordinate Mg(2+). K342, R371, S372, and K393 together coordinate (2R)-2-phosphoglycerate. Catalysis depends on K342, which acts as the Proton acceptor.

The protein belongs to the enolase family. As to quaternary structure, component of the RNA degradosome, a multiprotein complex involved in RNA processing and mRNA degradation. The cofactor is Mg(2+).

The protein localises to the cytoplasm. It is found in the secreted. The protein resides in the cell surface. The catalysed reaction is (2R)-2-phosphoglycerate = phosphoenolpyruvate + H2O. The protein operates within carbohydrate degradation; glycolysis; pyruvate from D-glyceraldehyde 3-phosphate: step 4/5. Its function is as follows. Catalyzes the reversible conversion of 2-phosphoglycerate (2-PG) into phosphoenolpyruvate (PEP). It is essential for the degradation of carbohydrates via glycolysis. In Erwinia tasmaniensis (strain DSM 17950 / CFBP 7177 / CIP 109463 / NCPPB 4357 / Et1/99), this protein is Enolase.